A 33-amino-acid chain; its full sequence is Photosystem II reaction center protein Psb30 (33 aa).

Residues 5–25 (ILSQLIAIAVTLFLGPVVVIL) traverse the membrane as a helical segment.

It belongs to the Psb30/Ycf12 family. PSII is composed of 1 copy each of membrane proteins PsbA, PsbB, PsbC, PsbD, PsbE, PsbF, PsbH, PsbI, PsbJ, PsbK, PsbL, PsbM, PsbT, PsbX, PsbY, PsbZ, Psb30/Ycf12, peripheral proteins of the oxygen-evolving complex and a large number of cofactors. It forms dimeric complexes.

The protein resides in the plastid. The protein localises to the chloroplast thylakoid membrane. Its function is as follows. A core subunit of photosystem II (PSII), probably helps stabilize the reaction center. The polypeptide is Photosystem II reaction center protein Psb30 (Oedogonium cardiacum (Filamentous green alga)).